The sequence spans 385 residues: Glucans biosynthesis protein C (385 aa).

Helical transmembrane passes span 17-39, 54-76, 88-110, 136-158, 179-198, 213-235, 242-261, 276-295, 308-330, and 334-356; these read AWLM…TWHV, FIHS…MLFL, VERV…FIML, LISH…WIFK, LSVI…RTIF, IVMQ…IFPH, TPSR…YLLN, SVIT…SFGH, FVNA…GAYI, and ITSN…IILY.

It belongs to the acyltransferase 3 family. OpgC subfamily.

The protein localises to the cell membrane. It participates in glycan metabolism; osmoregulated periplasmic glucan (OPG) biosynthesis. Functionally, necessary for the succinyl substitution of periplasmic glucans. Could catalyze the transfer of succinyl residues from the cytoplasmic side of the membrane to the nascent glucan backbones on the periplasmic side of the membrane. The chain is Glucans biosynthesis protein C from Escherichia coli O157:H7.